The primary structure comprises 400 residues: Subtilisin-like protease 7 (400 aa).

A signal peptide spans methionine 1–glycine 20. The propeptide occupies alanine 21–asparagine 119. An Inhibitor I9 domain is found at lysine 36–isoleucine 118. Residues serine 129–lysine 400 enclose the Peptidase S8 domain. Catalysis depends on charge relay system residues aspartate 161 and histidine 192. N-linked (GlcNAc...) asparagine glycosylation is found at asparagine 222 and asparagine 252. Serine 346 acts as the Charge relay system in catalysis. Asparagine 396 carries an N-linked (GlcNAc...) asparagine glycan.

The protein belongs to the peptidase S8 family.

The protein localises to the secreted. In terms of biological role, secreted subtilisin-like serine protease with keratinolytic activity that contributes to pathogenicity. In Arthroderma otae (strain ATCC MYA-4605 / CBS 113480) (Microsporum canis), this protein is Subtilisin-like protease 7 (SUB7).